A 232-amino-acid polypeptide reads, in one-letter code: Large ribosomal subunit protein uL1 (232 aa).

This sequence belongs to the universal ribosomal protein uL1 family. Part of the 50S ribosomal subunit.

Binds directly to 23S rRNA. The L1 stalk is quite mobile in the ribosome, and is involved in E site tRNA release. Functionally, protein L1 is also a translational repressor protein, it controls the translation of the L11 operon by binding to its mRNA. This is Large ribosomal subunit protein uL1 from Lysinibacillus sphaericus (strain C3-41).